The sequence spans 212 residues: Deoxyribose-phosphate aldolase (212 aa).

The active-site Proton donor/acceptor is the aspartate 89. Lysine 151 acts as the Schiff-base intermediate with acetaldehyde in catalysis. Lysine 180 serves as the catalytic Proton donor/acceptor.

Belongs to the DeoC/FbaB aldolase family. DeoC type 1 subfamily.

It is found in the cytoplasm. The catalysed reaction is 2-deoxy-D-ribose 5-phosphate = D-glyceraldehyde 3-phosphate + acetaldehyde. The protein operates within carbohydrate degradation; 2-deoxy-D-ribose 1-phosphate degradation; D-glyceraldehyde 3-phosphate and acetaldehyde from 2-deoxy-alpha-D-ribose 1-phosphate: step 2/2. Functionally, catalyzes a reversible aldol reaction between acetaldehyde and D-glyceraldehyde 3-phosphate to generate 2-deoxy-D-ribose 5-phosphate. The protein is Deoxyribose-phosphate aldolase of Clostridium botulinum (strain Loch Maree / Type A3).